A 427-amino-acid polypeptide reads, in one-letter code: Cyclic 2,3-diphosphoglycerate synthetase (427 aa).

The protein belongs to the cyclic 2,3-diphosphoglycerate synthetase family.

The protein resides in the cytoplasm. The enzyme catalyses (2R)-2,3-bisphosphoglycerate + ATP + H(+) = cyclic (2R)-2,3-bisphosphoglycerate + ADP + phosphate. Catalyzes the formation of cyclic 2,3-diphosphoglycerate (cDPG) by formation of an intramolecular phosphoanhydride bond at the expense of ATP. This is Cyclic 2,3-diphosphoglycerate synthetase from Pyrococcus abyssi (strain GE5 / Orsay).